A 208-amino-acid polypeptide reads, in one-letter code: Small ribosomal subunit protein uS4 (208 aa).

One can recognise an S4 RNA-binding domain in the interval 98–159 (RRLDNVAYRL…KSRKVAAISE (62 aa)).

Belongs to the universal ribosomal protein uS4 family. As to quaternary structure, part of the 30S ribosomal subunit. Contacts protein S5. The interaction surface between S4 and S5 is involved in control of translational fidelity.

One of the primary rRNA binding proteins, it binds directly to 16S rRNA where it nucleates assembly of the body of the 30S subunit. In terms of biological role, with S5 and S12 plays an important role in translational accuracy. In Geobacter sp. (strain M21), this protein is Small ribosomal subunit protein uS4.